Consider the following 334-residue polypeptide: Formamidase (334 aa).

One can recognise a CN hydrolase domain in the interval 14–260; the sequence is FLVAAIQFPV…WEIVTGEIYP (247 aa). Catalysis depends on Glu-60, which acts as the Proton acceptor. The Proton donor role is filled by Lys-133. Cys-166 serves as the catalytic Nucleophile.

It belongs to the carbon-nitrogen hydrolase superfamily. Aliphatic amidase family.

The catalysed reaction is formamide + H2O = formate + NH4(+). Is an aliphatic amidase with a restricted substrate specificity, as it only hydrolyzes formamide. The protein is Formamidase of Helicobacter pylori (strain P12).